Reading from the N-terminus, the 428-residue chain is Putative oxidoreductase YteT (428 aa).

Positions 1–23 (MKNIVFCGLSSRAFSMFIKPLME) are cleaved as a signal peptide.

This sequence belongs to the Gfo/Idh/MocA family.

In terms of biological role, may play a role in the degradation of type I rhamnogalacturonan derived from plant cell walls. This chain is Putative oxidoreductase YteT (yteT), found in Bacillus subtilis (strain 168).